Consider the following 271-residue polypeptide: MTEVRRRGRPGQAEPVAQKGAQALERGIAILQYLEKSGGSSSVSDISLNLDLPLSTTFRLLKVLQAADFVYQDSQLGWWHIGLGVFNVGAAYIHNRDVLSVAGPFMRRLMLLSGETVNVAIRNGNEAVLIGQLECKSMVRMCAPLGSRLPLHASGAGKALLYPLAEEELMSIILQTGLQQFTPTTLVDMPTLLKDLEQARELGYTVDKEEHVVGLNCIASAIYDDVGSVVAAISISGPSSRLTEDRFVSQGELVRDTARDISTALGLKAHL.

The HTH iclR-type domain maps to alanine 21 to leucine 83. Residues valine 43–lysine 62 constitute a DNA-binding region (H-T-H motif). The IclR-ED domain occupies valine 98–leucine 267. Residues serine 154–alanine 156, aspartate 207, cysteine 217, and serine 234–serine 236 contribute to the glyoxylate site.

In terms of biological role, negative regulator of allantoin and glyoxylate utilization operons. Binds to the gcl promoter and to the allS-allA intergenic region. This chain is HTH-type transcriptional repressor AllR (allR), found in Escherichia coli (strain UTI89 / UPEC).